Consider the following 196-residue polypeptide: Small ribosomal subunit protein uS4C (196 aa).

In terms of domain architecture, S4 RNA-binding spans Cys-87 to Asn-149.

Belongs to the universal ribosomal protein uS4 family. In terms of assembly, part of the 30S ribosomal subunit. Contacts protein S5. The interaction surface between S4 and S5 is involved in control of translational fidelity.

Its function is as follows. One of the primary rRNA binding proteins, it binds directly to 16S rRNA where it nucleates assembly of the body of the 30S subunit. Functionally, with S5 and S12 plays an important role in translational accuracy. The protein is Small ribosomal subunit protein uS4C (rpsD3) of Clostridium acetobutylicum (strain ATCC 824 / DSM 792 / JCM 1419 / IAM 19013 / LMG 5710 / NBRC 13948 / NRRL B-527 / VKM B-1787 / 2291 / W).